The chain runs to 435 residues: Divergent protein kinase domain 2B (435 aa).

The first 33 residues, 1–33 (MESQWRGAAATAFHQHWLARLLLWVSTLSCSFS), serve as a signal peptide directing secretion. Residues asparagine 102 and asparagine 395 are each glycosylated (N-linked (GlcNAc...) asparagine).

Belongs to the DIPK family.

Its subcellular location is the secreted. The chain is Divergent protein kinase domain 2B (Dipk2b) from Mus musculus (Mouse).